We begin with the raw amino-acid sequence, 397 residues long: Phosphoglycerate kinase (397 aa).

Residues 21–23, Arg36, 59–62, Arg114, and Arg147 contribute to the substrate site; these read DMN and HLGR. Residues Lys198, Glu320, and 346 to 349 each bind ATP; that span reads GGDT.

It belongs to the phosphoglycerate kinase family. In terms of assembly, monomer.

The protein resides in the cytoplasm. It catalyses the reaction (2R)-3-phosphoglycerate + ATP = (2R)-3-phospho-glyceroyl phosphate + ADP. It participates in carbohydrate degradation; glycolysis; pyruvate from D-glyceraldehyde 3-phosphate: step 2/5. This is Phosphoglycerate kinase from Neisseria gonorrhoeae (strain NCCP11945).